The primary structure comprises 1297 residues: MEQIVTFGGITIDNVSPDHIQQLYSVKLNGTSNNEEIPTEFPNIIQSVCSCDKHVVELTMDVFKLVDTTENSSCAICRYQENEPCIEHKSSESNTKCPIAQSVSCSHSFHACCISRWLHTKKTCPLCNIEWQLIGANNDSVVIYFDDKNQEFKLSDNLVEDIGRQFGIDMDNYIVCKNKSPVTEYKNSTYALCTRDRHNSQNGQTNLKIICEFDSKTENLFIKYSTTIEELRKLVSQTFDLFKDQVKLIYNNIEISKDFDNLTVFNIGIKNDSNLAVECYKSFTYDMEITNNFMVLYVPDTFNTTNSSNNIQSVVSGSIAWIPQPFIDNVTNKDLRCLLSSLYILVKKVNLNTELIQSVTDRFEKYMELYGMHYRQIKLAKDSLRCLLEMNHFNNKDRMILSCTFYELIDRIQRDNNINKNPLLSSNLICNLILSDKQVNEQTKINWKFLAKDVRITKVFNIYSPLVLTNSVPPLLTLNKNLDVVVFTGKGKDVSLPIILYDTLTNSETDVNAAELGKIVSDKGDLMMVDDRIYEEAIMVCIDTSNSMSKASDFDEDIKLKRSSIIETKNRFYEILKTESHSSPQESDIRQLTNTIIWFITHPNFEDWYRKLYSQELIRSIACFEQKVYPNFAMMLVKYPWFFNKLLTSKKVVVNNTWYSFIRNESNSNYNETKYSKEPLQEFLCPISHEIMEHPVVAKDGFTYEKSNILKWFENKSTSPMTNEKISKKICDNKVLKSIIRDWKENNTVIEQSDKLSVTIKLPDPWNETVIHYNETDNIWDLIYQIYHITGLSHDQYKLTSNYWAIDKSSLIKQISSKIKIHPFEKKMVDVKICDKTYFFGTENTMTVSSFYTVGNLLYKLKSRKYHRYAVWYGLKDSGDGFQRGTILSPHDKLIDYSEMTLEIHSSNRYKTPKGNHLSRLDVVKKLFDAYINRSIAYSFNTAIGLMSFSDKSVLECAISPFYESFREKVNELDTSGATALYECLKDSIENLIEWKNADLENRSKAKLRIICLTDGKDTGLDKFKNTVKHKSQYHNVTIDCILIGSDYDNYLGKIGEKTNGYVFNPSTIKYALDIMELETMISSTNRKTIFYHNTIDEKTIPPIINPTKKLHAKAISPMEIISKTNENTKLSQKLIRVQREIVDVMKNQHPDIDVYINEQDISFWKIVFKGPDSTPYKNGTWLAYIQFTEEYPNIAPNIRFVTPIKHCNINNYGRVCHSILDRNYTPNVKISLILQCIYGLLLNPDVNDPLDTNLAMIYYDANGLYEAQIIDYVNKFALKSREEWNQELAKNQFKNW.

The segment at 74–128 (CAICRYQENEPCIEHKSSESNTKCPIAQSVSCSHSFHACCISRWLHTKKTCPLCN) adopts an RING-type; atypical zinc-finger fold. In terms of domain architecture, U-box spans 678–750 (EPLQEFLCPI…RDWKENNTVI (73 aa)). Positions 899–1082 (EMTLEIHSSN…LDIMELETMI (184 aa)) constitute a VWFA domain. The region spanning 1133–1279 (QKLIRVQREI…IIDYVNKFAL (147 aa)) is the UBC core domain. Cysteine 1217 acts as the Glycyl thioester intermediate in catalysis.

It in the C-terminal section; belongs to the ubiquitin-conjugating enzyme family.

It carries out the reaction S-ubiquitinyl-[E2 ubiquitin-conjugating enzyme]-L-cysteine + [acceptor protein]-L-lysine = [E2 ubiquitin-conjugating enzyme]-L-cysteine + N(6)-ubiquitinyl-[acceptor protein]-L-lysine.. It catalyses the reaction S-ubiquitinyl-[E1 ubiquitin-activating enzyme]-L-cysteine + [E2 ubiquitin-conjugating enzyme]-L-cysteine = [E1 ubiquitin-activating enzyme]-L-cysteine + S-ubiquitinyl-[E2 ubiquitin-conjugating enzyme]-L-cysteine.. It participates in protein modification; protein ubiquitination. In terms of biological role, catalyzes the covalent attachment of ubiquitin to other proteins. Also acts as an E3 ubiquitin-protein ligase. This is Probable bifunctional E2/E3 enzyme R795 from Acanthamoeba polyphaga (Amoeba).